We begin with the raw amino-acid sequence, 917 residues long: Protein translocase subunit SecA (917 aa).

Residues Q87, 105–109 (GEGKT), and D513 each bind ATP. Positions 834-917 (EEQMNEMEKR…YKSCHGKLTG (84 aa)) are disordered. Over residues 839-852 (EMEKRRQEEAERQR) the composition is skewed to basic and acidic residues. Residues 862 to 876 (APSQLAAPATPATPE) show a composition bias toward low complexity. Zn(2+)-binding residues include C900, C902, C911, and H912.

The protein belongs to the SecA family. As to quaternary structure, monomer and homodimer. Part of the essential Sec protein translocation apparatus which comprises SecA, SecYEG and auxiliary proteins SecDF-YajC and YidC. Zn(2+) serves as cofactor.

Its subcellular location is the cell inner membrane. The protein resides in the cytoplasm. The catalysed reaction is ATP + H2O + cellular proteinSide 1 = ADP + phosphate + cellular proteinSide 2.. Part of the Sec protein translocase complex. Interacts with the SecYEG preprotein conducting channel. Has a central role in coupling the hydrolysis of ATP to the transfer of proteins into and across the cell membrane, serving both as a receptor for the preprotein-SecB complex and as an ATP-driven molecular motor driving the stepwise translocation of polypeptide chains across the membrane. This Saccharophagus degradans (strain 2-40 / ATCC 43961 / DSM 17024) protein is Protein translocase subunit SecA.